The primary structure comprises 85 residues: Major outer membrane protein 1 (85 aa).

The signal sequence occupies residues 1 to 18 (MEAREVEEMRRSRLLTLG). A helical membrane pass occupies residues 22 to 42 (YTAVIALAALVLVMGALGLVL).

Forms extremely stable complexes with apparent masses of 150, 50, 45 and 38 kDa. Found in a ring-shaped complex of 7 nm diameter with a 2 nm channel through the middle. Complete denaturation requires temperatures over 110 degrees Celsius.

The protein resides in the cell outer membrane. The most abundant protein of the outer membrane, it forms a pore through it. The chain is Major outer membrane protein 1 (ihomp1) from Ignicoccus hospitalis (strain KIN4/I / DSM 18386 / JCM 14125).